We begin with the raw amino-acid sequence, 448 residues long: Homogentisate 1,2-dioxygenase (448 aa).

His-303 serves as the catalytic Proton acceptor. Fe cation-binding residues include His-346 and Glu-352. Residues Tyr-361 and His-382 each coordinate homogentisate. His-382 serves as a coordination point for Fe cation.

Belongs to the homogentisate dioxygenase family. Hexamer; dimer of trimers. It depends on Fe cation as a cofactor.

The enzyme catalyses homogentisate + O2 = 4-maleylacetoacetate + H(+). The protein operates within amino-acid degradation; L-phenylalanine degradation; acetoacetate and fumarate from L-phenylalanine: step 4/6. Its function is as follows. Involved in the catabolism of homogentisate (2,5-dihydroxyphenylacetate or 2,5-OH-PhAc), a central intermediate in the degradation of phenylalanine and tyrosine. Catalyzes the oxidative ring cleavage of the aromatic ring of homogentisate to yield maleylacetoacetate. The chain is Homogentisate 1,2-dioxygenase from Rhodopseudomonas palustris (strain BisA53).